Reading from the N-terminus, the 294-residue chain is 4-hydroxy-tetrahydrodipicolinate synthase (294 aa).

A pyruvate-binding site is contributed by Thr-45. Tyr-133 acts as the Proton donor/acceptor in catalysis. Lys-161 functions as the Schiff-base intermediate with substrate in the catalytic mechanism. Pyruvate is bound at residue Ile-203.

Belongs to the DapA family. In terms of assembly, homotetramer; dimer of dimers.

It localises to the cytoplasm. It catalyses the reaction L-aspartate 4-semialdehyde + pyruvate = (2S,4S)-4-hydroxy-2,3,4,5-tetrahydrodipicolinate + H2O + H(+). It participates in amino-acid biosynthesis; L-lysine biosynthesis via DAP pathway; (S)-tetrahydrodipicolinate from L-aspartate: step 3/4. In terms of biological role, catalyzes the condensation of (S)-aspartate-beta-semialdehyde [(S)-ASA] and pyruvate to 4-hydroxy-tetrahydrodipicolinate (HTPA). In Shewanella sp. (strain MR-7), this protein is 4-hydroxy-tetrahydrodipicolinate synthase.